A 292-amino-acid chain; its full sequence is MREIIELYRKVGGFQALHVAEAYDVLKEAVEAADVRFLSFTGNLVATGLREFIADAIRRRLFNVVVTTAGALDHDIAKSMGAVYAPGSFDLDDVDLAAKGYHRLGNVVIKKEEYGPLVEKFILAHCEKLWGKTLATYELAYLLGAELPEDSILGAAARAGAKVFVPGIVDGAVGTALMTCNDLARTKRGGSRAFIDVLKDEEELREIVHNSKKLAALIVGGGISKHHVIWWAQFKGGLDYVVYISTAVEYDGSLSGARPREAISWGKVKPSAKSVFIFADATLVLPVLLKAL.

K267 (nucleophile) is an active-site residue.

This sequence belongs to the deoxyhypusine synthase family. NAD(+) serves as cofactor.

The enzyme catalyses [eIF5A protein]-L-lysine + spermidine = [eIF5A protein]-deoxyhypusine + propane-1,3-diamine. It participates in protein modification; eIF5A hypusination. In terms of biological role, catalyzes the NAD-dependent oxidative cleavage of spermidine and the subsequent transfer of the butylamine moiety of spermidine to the epsilon-amino group of a specific lysine residue of the eIF-5A precursor protein to form the intermediate deoxyhypusine residue. The protein is Probable deoxyhypusine synthase (dys) of Pyrobaculum aerophilum (strain ATCC 51768 / DSM 7523 / JCM 9630 / CIP 104966 / NBRC 100827 / IM2).